Here is a 162-residue protein sequence, read N- to C-terminus: MSQSANRLCRIDIDDSALPPPSPEIEQDRRVAVFDLLEDNSFTLPGREGQDVPPGPYALALAVREKRLVFDIATESGSKVAEFHLSLGPFRQTVKDYFQICTSYFDAVKRLPPAQIEAIDMARRGIHNEGARTLQERLEGKAEVDIDTARRLFTLICALVPG.

Residues 1–22 are disordered; it reads MSQSANRLCRIDIDDSALPPPS.

Belongs to the UPF0262 family.

In Paracoccus denitrificans (strain Pd 1222), this protein is UPF0262 protein Pden_1958.